The chain runs to 328 residues: UPF0421 protein SAUSA300_1870 (328 aa).

Transmembrane regions (helical) follow at residues 19–39 (IAIF…IYAI), 61–81 (LPAT…FGDQ), 108–128 (VAVL…IFNF), and 132–152 (TLTA…VFPP).

The protein belongs to the UPF0421 family.

It is found in the cell membrane. The chain is UPF0421 protein SAUSA300_1870 from Staphylococcus aureus (strain USA300).